The primary structure comprises 200 residues: dTTP/UTP pyrophosphatase (200 aa).

The active-site Proton acceptor is D81.

Belongs to the Maf family. YhdE subfamily. A divalent metal cation is required as a cofactor.

The protein localises to the cytoplasm. It catalyses the reaction dTTP + H2O = dTMP + diphosphate + H(+). It carries out the reaction UTP + H2O = UMP + diphosphate + H(+). In terms of biological role, nucleoside triphosphate pyrophosphatase that hydrolyzes dTTP and UTP. May have a dual role in cell division arrest and in preventing the incorporation of modified nucleotides into cellular nucleic acids. In Cupriavidus metallidurans (strain ATCC 43123 / DSM 2839 / NBRC 102507 / CH34) (Ralstonia metallidurans), this protein is dTTP/UTP pyrophosphatase.